We begin with the raw amino-acid sequence, 461 residues long: Glucan endo-1,3-beta-glucosidase (461 aa).

The signal sequence occupies residues 1-23 (MPLLILLMLLAAGAAGAESATPS). Catalysis depends on glutamate 123, which acts as the Proton donor. The active-site Nucleophile is the glutamate 265. Residues 350 to 375 (GASVAPTPSPNPSPNPSPKPAPSGGG) form a disordered region. The segment covering 356 to 370 (TPSPNPSPNPSPKPA) has biased composition (pro residues). Residues cysteine 378 and cysteine 439 are joined by a disulfide bond.

This sequence belongs to the glycosyl hydrolase 17 family. Contains two additional disulfide bonds.

The catalysed reaction is Hydrolysis of (1-&gt;3)-beta-D-glucosidic linkages in (1-&gt;3)-beta-D-glucans.. In terms of biological role, is thought to be an important plant defense-related product against fungal pathogens. This Triticum aestivum (Wheat) protein is Glucan endo-1,3-beta-glucosidase (GLC1).